Reading from the N-terminus, the 144-residue chain is Large ribosomal subunit protein uL15 (144 aa).

A disordered region spans residues 1–48 (MIKLESLQDPSPRKRRTKLLGRGPSSGHGKTSCRGHKGDGSRSGYKRR).

This sequence belongs to the universal ribosomal protein uL15 family. In terms of assembly, part of the 50S ribosomal subunit.

Functionally, binds to the 23S rRNA. The sequence is that of Large ribosomal subunit protein uL15 from Chlamydia abortus (strain DSM 27085 / S26/3) (Chlamydophila abortus).